The primary structure comprises 398 residues: Substance-K receptor (398 aa).

Residues 1-32 (MGTCDIVTEANISSGPESNTTGITAFSMPSWQ) lie on the Extracellular side of the membrane. N-linked (GlcNAc...) asparagine glycans are attached at residues Asn-11 and Asn-19. A helical membrane pass occupies residues 33-56 (LALWATAYLALVLVAVTGNAIVIW). Over 57 to 69 (IILAHRRMRTVTN) the chain is Cytoplasmic. Residues 70–90 (YFIVNLALADLCMAAFNAAFN) traverse the membrane as a helical segment. Residues 91 to 107 (FVYASHNIWYFGRAFCY) are Extracellular-facing. A disulfide bridge connects residues Cys-106 and Cys-181. The helical transmembrane segment at 108–129 (FQNLFPITAMFVSIYSMTAIAA) threads the bilayer. At 130–149 (DRYMAIVHPFQPRLSAPSTK) the chain is on the cytoplasmic side. A helical membrane pass occupies residues 150–170 (AVIAGIWLVALALASPQCFYS). At 171-196 (TVTMDQGATKCVVAWPEDSGGKTLLL) the chain is on the extracellular side. The helical transmembrane segment at 197-218 (YHLVVIALIYFLPLAVMFVAYS) threads the bilayer. Topologically, residues 219–251 (VIGLTLWRRAVPGHQAHGANLRHLQAMKKFVKT) are cytoplasmic. A helical membrane pass occupies residues 252-272 (MVLVVLTFAICWLPYHLYFIL). Residues 273 to 290 (GSFQEDIYCHKFIQQVYL) are Extracellular-facing. Residues 291 to 310 (ALFWLAMSSTMYNPIIYCCL) traverse the membrane as a helical segment. Residues 311–398 (NHRFRSGFRL…LAPTKTHVEI (88 aa)) are Cytoplasmic-facing. Residue Cys-324 is the site of S-palmitoyl cysteine attachment.

It belongs to the G-protein coupled receptor 1 family.

The protein localises to the cell membrane. Functionally, this is a receptor for the tachykinin neuropeptide substance K (neurokinin A). It is associated with G proteins that activate a phosphatidylinositol-calcium second messenger system. The rank order of affinity of this receptor to tachykinins is: substance K &gt; neuromedin-K &gt; substance P. The polypeptide is Substance-K receptor (TACR2) (Homo sapiens (Human)).